We begin with the raw amino-acid sequence, 393 residues long: MQQTKKLTHSDITIAVMSGPFLQRGEPALVSKWYRTKMALACGVDLVVELPYAFSTQKAETFANGAISILNALHVSEICFGSEDGQIENFYNTISVQKNEEETFNRLVKQFMNAGNSYAKATSEAFLHILSSEKNIDMSQPNNILGFQYIKAILMQNSSMQAQTIKRFASHYHDETFNDQHIASATSIRKQLFSENSSFKEIEPFIPKATASLLASYKQNYGTLHNWEQYFSFFKYKLMTMSPEDLRHIYEIEEGLEHRILSKIQTSSSFHSFMEALKTKRYTWTRLQRACTHILTNTTKEEIHCANIEQHAPYIRLLGMSQKGQTYLSKNKKKIELPILTHTKTFDHPTLHIEQKANSVYFSIIQEPLRTQLLKQDATHHPIRYDETTAKFL.

3 residues coordinate ATP: Gly-81, Asn-142, and Arg-167.

The protein belongs to the TmcAL family.

The protein resides in the cytoplasm. The enzyme catalyses cytidine(34) in elongator tRNA(Met) + acetate + ATP = N(4)-acetylcytidine(34) in elongator tRNA(Met) + AMP + diphosphate. Functionally, catalyzes the formation of N(4)-acetylcytidine (ac(4)C) at the wobble position of elongator tRNA(Met), using acetate and ATP as substrates. First activates an acetate ion to form acetyladenylate (Ac-AMP) and then transfers the acetyl group to tRNA to form ac(4)C34. This chain is tRNA(Met) cytidine acetate ligase, found in Bacillus cereus (strain Q1).